Reading from the N-terminus, the 315-residue chain is DNA-directed RNA polymerase subunit alpha (315 aa).

The segment at 1-228 is alpha N-terminal domain (alpha-NTD); it reads MAQFQIECVE…DLFNPLKDIS (228 aa). The segment at 238–315 is alpha C-terminal domain (alpha-CTD); sequence IPDDPTAQIP…LPQERSSKHS (78 aa).

This sequence belongs to the RNA polymerase alpha chain family. In cyanobacteria the RNAP catalytic core is composed of 2 alpha, 1 beta, 1 beta', 1 gamma and 1 omega subunit. When a sigma factor is associated with the core the holoenzyme is formed, which can initiate transcription.

The enzyme catalyses RNA(n) + a ribonucleoside 5'-triphosphate = RNA(n+1) + diphosphate. Its function is as follows. DNA-dependent RNA polymerase catalyzes the transcription of DNA into RNA using the four ribonucleoside triphosphates as substrates. The polypeptide is DNA-directed RNA polymerase subunit alpha (Trichormus variabilis (strain ATCC 29413 / PCC 7937) (Anabaena variabilis)).